A 546-amino-acid chain; its full sequence is Crossover junction endonuclease EME1A (546 aa).

Disordered regions lie at residues 1-55 (MSDF…FLDE) and 88-232 (VISL…REKQ). Over residues 28–49 (PTDLNLDTEPSLQKQPPGSAST) the composition is skewed to polar residues. Composition is skewed to basic and acidic residues over residues 103–120 (SSKK…KPCR) and 149–167 (DAIE…VEKM). A compositionally biased stretch (polar residues) spans 173–183 (TITSKSTSLSA). A coiled-coil region spans residues 188-245 (KKKMSKDEKTRAAEEKKLQKEQEKLQKAASKAEDAEHKKLEREKQKWAKEKDKALKCI). A compositionally biased stretch (basic and acidic residues) spans 192 to 232 (SKDEKTRAAEEKKLQKEQEKLQKAASKAEDAEHKKLEREKQ). The 201-residue stretch at 278–478 (NPIQRSIVWT…PSLKSLLKVY (201 aa)) folds into the ERCC4 domain.

This sequence belongs to the EME1/MMS4 family. Forms a heterodimer with MUS81. Mg(2+) is required as a cofactor. The cofactor is Ca(2+).

The protein localises to the nucleus. Its function is as follows. Interacts with MUS81 to form a DNA structure-specific endonuclease with substrate preference for branched DNA structures with a 5'-end at the branch nick. Typical substrates include 3'-flap structures, D-loops, replication forks, nicked Holliday junctions and also intact Holliday junctions with a reduced efficiency. May be required in mitosis for the processing of stalled or collapsed replication fork intermediates. Plays a role in DNA repair and in genotoxic stress-induced homologous recombination (HR) in somatic cells. Mediates a subset of meiotic recombination events that are insensitive to crossover interference. This is Crossover junction endonuclease EME1A (EME1A) from Arabidopsis thaliana (Mouse-ear cress).